A 228-amino-acid polypeptide reads, in one-letter code: Pyridoxamine 5'-phosphate oxidase (228 aa).

Residue 20-23 coordinates pyridoxal 5'-phosphate; sequence QYDK. Residue Lys29 forms a Glycyl lysine isopeptide (Lys-Gly) (interchain with G-Cter in ubiquitin) linkage. 73–76 lines the FMN pocket; that stretch reads RILL. Residue Lys78 participates in pyridoxal 5'-phosphate binding. Residues 88–89, 95–96, and Gln118 contribute to the FMN site; these read YS and RK. Residues Tyr136, Arg140, and Ser144 each coordinate pyridoxal 5'-phosphate. Residues 153–154 and Trp199 contribute to the FMN site; that span reads QS. A pyridoxal 5'-phosphate-binding site is contributed by 205–207; the sequence is RLH. Arg209 lines the FMN pocket.

The protein belongs to the pyridoxamine 5'-phosphate oxidase family. As to quaternary structure, homodimer. The cofactor is FMN.

The protein localises to the mitochondrion intermembrane space. The catalysed reaction is pyridoxamine 5'-phosphate + O2 + H2O = pyridoxal 5'-phosphate + H2O2 + NH4(+). The enzyme catalyses pyridoxine 5'-phosphate + O2 = pyridoxal 5'-phosphate + H2O2. Its pathway is cofactor metabolism; pyridoxal 5'-phosphate salvage; pyridoxal 5'-phosphate from pyridoxamine 5'-phosphate: step 1/1. The protein operates within cofactor metabolism; pyridoxal 5'-phosphate salvage; pyridoxal 5'-phosphate from pyridoxine 5'-phosphate: step 1/1. In terms of biological role, catalyzes the oxidation of either pyridoxine 5'-phosphate (PNP) or pyridoxamine 5'-phosphate (PMP) into pyridoxal 5'-phosphate (PLP). The protein is Pyridoxamine 5'-phosphate oxidase (PDX3) of Saccharomyces cerevisiae (strain ATCC 204508 / S288c) (Baker's yeast).